The chain runs to 156 residues: Ribonuclease pancreatic (156 aa).

An N-terminal signal peptide occupies residues M1 to G28. Residues K35 and R38 each coordinate substrate. H40 (proton acceptor) is an active-site residue. Intrachain disulfides connect C54–C112, C68–C123, C86–C138, and C93–C100. N62 is a glycosylation site (N-linked (GlcNAc...) asparagine). A substrate-binding site is contributed by K69–T73. N-linked (GlcNAc...) asparagine glycosylation occurs at N90. Substrate is bound at residue K94. N-linked (GlcNAc...) asparagine glycosylation is present at N104. R113 contacts substrate. H147 acts as the Proton donor in catalysis.

The protein belongs to the pancreatic ribonuclease family. Monomer. Interacts with and forms tight 1:1 complexes with RNH1. Dimerization of two such complexes may occur. Interaction with RNH1 inhibits this protein.

Its subcellular location is the secreted. It carries out the reaction an [RNA] containing cytidine + H2O = an [RNA]-3'-cytidine-3'-phosphate + a 5'-hydroxy-ribonucleotide-3'-[RNA].. The catalysed reaction is an [RNA] containing uridine + H2O = an [RNA]-3'-uridine-3'-phosphate + a 5'-hydroxy-ribonucleotide-3'-[RNA].. Its function is as follows. Endonuclease that catalyzes the cleavage of RNA on the 3' side of pyrimidine nucleotides. Acts on single-stranded and double-stranded RNA. This Lemur catta (Ring-tailed lemur) protein is Ribonuclease pancreatic (RNASE1).